A 240-amino-acid polypeptide reads, in one-letter code: tRNA pseudouridine synthase B (240 aa).

D48 acts as the Nucleophile in catalysis.

This sequence belongs to the pseudouridine synthase TruB family. Type 1 subfamily.

It carries out the reaction uridine(55) in tRNA = pseudouridine(55) in tRNA. Functionally, responsible for synthesis of pseudouridine from uracil-55 in the psi GC loop of transfer RNAs. The sequence is that of tRNA pseudouridine synthase B from Bacteroides thetaiotaomicron (strain ATCC 29148 / DSM 2079 / JCM 5827 / CCUG 10774 / NCTC 10582 / VPI-5482 / E50).